The following is a 380-amino-acid chain: MFVRHLTLTDFRSWARADLELEPGRTVFVGPNGFGKTNLVEALWYSATLGSHRVASDAPLIRVGAPRAVVSTIVVNEGRELAVDLEITTGRANKARLNRSPVRSPREVLGVLRAVLFAPEDLALVRGDPGERRRYLDELATTRRPSIAGVRADYDRVIRQRTALLKSAAGARYRGDRSVLETLDVWDGHLAAHGALLMAARADLVHHLAPEVEKAYQLLAPGSRPAAIRYRTSIDAEDDVSAEYYEAALLDAMTRRRDAELERGVCLVGPHRDDLELRLGDQMAKGYASHGESWSMALSLRLAAYELLRTDGSDPVLLLDDVFAELDAARRRALAEVAASAEQVLVTAAVAEDIPADWDARRIMIRMQDDDDGRVSMVES.

An ATP-binding site is contributed by 30-37; sequence GPNGFGKT.

This sequence belongs to the RecF family.

The protein localises to the cytoplasm. The RecF protein is involved in DNA metabolism; it is required for DNA replication and normal SOS inducibility. RecF binds preferentially to single-stranded, linear DNA. It also seems to bind ATP. This Mycobacterium sp. (strain KMS) protein is DNA replication and repair protein RecF.